The primary structure comprises 61 residues: ORF6 protein (61 aa).

Positions 18–24 (IMRTFKV) are important for host Golgi localization.

It belongs to the coronaviruses accessory protein 6 family. As to quaternary structure, interacts (via C-terminus) with host RAE1 in the NUP98-RAE1 complex; this interaction disrupts the host nuclear import. Interacts with host KPNA2; this interaction may inhibit IFN-beta production by blocking IRF3 nuclear translocation.

The protein localises to the host endoplasmic reticulum membrane. Its subcellular location is the host Golgi apparatus membrane. In terms of biological role, disrupts bidirectional nucleocytoplasmic transport by interacting with the host RAE1-NUP98 complex. Disrupts cell nuclear import complex formation by tethering karyopherin alpha 2 and karyopherin beta 1 to the membrane. Retention of import factors at the ER/Golgi membrane leads to a loss of transport into the nucleus. Prevents STAT1 nuclear translocation in response to interferon signaling, thus blocking the expression of interferon stimulated genes (ISGs) that display multiple antiviral activities. Suppresses IFN-beta production possibly by blocking IRF3 nuclear translocation. Might induce accumulation of host HNRNPA1. Its function is as follows. May play a role in viral double membrane vesicles networks to enhance viral replication. In Homo sapiens (Human), this protein is ORF6 protein.